Consider the following 218-residue polypeptide: Small ribosomal subunit protein uS3c (218 aa).

A KH type-2 domain is found at 47 to 118 (VQKNIRISSG…KLNIAITRIS (72 aa)).

The protein belongs to the universal ribosomal protein uS3 family. In terms of assembly, part of the 30S ribosomal subunit.

Its subcellular location is the plastid. The protein resides in the chloroplast. This Crucihimalaya wallichii (Rock-cress) protein is Small ribosomal subunit protein uS3c (rps3).